The sequence spans 502 residues: 4-hydroxy-3-methylbut-2-enyl diphosphate reductase, chloroplastic (502 aa).

Residues 1 to 48 (MQVLPQTRVQGVPSGRNLSCSKAVGGTPLRALTRDVVRPARSVNVHVV) constitute a chloroplast transit peptide. [4Fe-4S] cluster is bound at residue Cys-140. His-170 contacts (2E)-4-hydroxy-3-methylbut-2-enyl diphosphate. Cys-232 contacts [4Fe-4S] cluster. His-260 contacts (2E)-4-hydroxy-3-methylbut-2-enyl diphosphate. The Proton donor role is filled by Glu-262. Thr-325 is a binding site for (2E)-4-hydroxy-3-methylbut-2-enyl diphosphate. A [4Fe-4S] cluster-binding site is contributed by Cys-363. Residues 398–400 (SSN) and Ser-461 contribute to the (2E)-4-hydroxy-3-methylbut-2-enyl diphosphate site.

The protein belongs to the IspH family. In terms of assembly, homodimer. It depends on [4Fe-4S] cluster as a cofactor.

It is found in the plastid. The protein resides in the chloroplast stroma. The enzyme catalyses dimethylallyl diphosphate + 2 oxidized [2Fe-2S]-[ferredoxin] + H2O = (2E)-4-hydroxy-3-methylbut-2-enyl diphosphate + 2 reduced [2Fe-2S]-[ferredoxin] + 2 H(+). It carries out the reaction isopentenyl diphosphate + 2 oxidized [2Fe-2S]-[ferredoxin] + H2O = (2E)-4-hydroxy-3-methylbut-2-enyl diphosphate + 2 reduced [2Fe-2S]-[ferredoxin] + 2 H(+). It functions in the pathway isoprenoid biosynthesis; dimethylallyl diphosphate biosynthesis; dimethylallyl diphosphate from (2E)-4-hydroxy-3-methylbutenyl diphosphate: step 1/1. The protein operates within isoprenoid biosynthesis; isopentenyl diphosphate biosynthesis via DXP pathway; isopentenyl diphosphate from 1-deoxy-D-xylulose 5-phosphate: step 6/6. In terms of biological role, enzyme of the plastid non-mevalonate pathway for isoprenoid biosynthesis that converts 1-hydroxy-2-methyl-2-(E)-butenyl 4-diphosphate into isopentenyl diphosphate (IPP) and dimethylallyl diphosphate (DMAPP). The sequence is that of 4-hydroxy-3-methylbut-2-enyl diphosphate reductase, chloroplastic from Botryococcus braunii (Green alga).